The following is a 278-amino-acid chain: Large ribosomal subunit protein uL2 (278 aa).

Disordered stretches follow at residues 29 to 57 (PEKS…QGGG) and 224 to 278 (VAMN…NKKR). Residues 258–278 (RSPKKASNKYIVRRRKTNKKR) are compositionally biased toward basic residues.

The protein belongs to the universal ribosomal protein uL2 family. Part of the 50S ribosomal subunit. Forms a bridge to the 30S subunit in the 70S ribosome.

In terms of biological role, one of the primary rRNA binding proteins. Required for association of the 30S and 50S subunits to form the 70S ribosome, for tRNA binding and peptide bond formation. It has been suggested to have peptidyltransferase activity; this is somewhat controversial. Makes several contacts with the 16S rRNA in the 70S ribosome. In Streptomyces griseus subsp. griseus (strain JCM 4626 / CBS 651.72 / NBRC 13350 / KCC S-0626 / ISP 5235), this protein is Large ribosomal subunit protein uL2.